Consider the following 177-residue polypeptide: Large ribosomal subunit protein uL6 (177 aa).

Belongs to the universal ribosomal protein uL6 family. Part of the 50S ribosomal subunit.

Its function is as follows. This protein binds to the 23S rRNA, and is important in its secondary structure. It is located near the subunit interface in the base of the L7/L12 stalk, and near the tRNA binding site of the peptidyltransferase center. In Vibrio parahaemolyticus serotype O3:K6 (strain RIMD 2210633), this protein is Large ribosomal subunit protein uL6.